A 125-amino-acid chain; its full sequence is MPTINQLVRKGREKGEQKSTAPALKSCPQKRGVCTRVYTTTPKKPNSALRKIARVRLTNGIEVTAYIPGIGHNLQEHSVVLIRGGRVKDLPGVRYHIIRGTLDASGVQKRNQGRSKYGTKRPKKK.

Residues 1–27 (MPTINQLVRKGREKGEQKSTAPALKSC) are disordered. Asp89 carries the post-translational modification 3-methylthioaspartic acid. A disordered region spans residues 103–125 (DASGVQKRNQGRSKYGTKRPKKK). Basic residues predominate over residues 111 to 125 (NQGRSKYGTKRPKKK).

Belongs to the universal ribosomal protein uS12 family. As to quaternary structure, part of the 30S ribosomal subunit. Contacts proteins S8 and S17. May interact with IF1 in the 30S initiation complex.

Its function is as follows. With S4 and S5 plays an important role in translational accuracy. In terms of biological role, interacts with and stabilizes bases of the 16S rRNA that are involved in tRNA selection in the A site and with the mRNA backbone. Located at the interface of the 30S and 50S subunits, it traverses the body of the 30S subunit contacting proteins on the other side and probably holding the rRNA structure together. The combined cluster of proteins S8, S12 and S17 appears to hold together the shoulder and platform of the 30S subunit. The protein is Small ribosomal subunit protein uS12 of Syntrophomonas wolfei subsp. wolfei (strain DSM 2245B / Goettingen).